We begin with the raw amino-acid sequence, 206 residues long: Large ribosomal subunit protein bL9 (206 aa).

The disordered stretch occupies residues 182–206 (FAENQQKALAKEMNDNDANSINEEA). Over residues 197–206 (NDANSINEEA) the composition is skewed to polar residues.

The protein belongs to the bacterial ribosomal protein bL9 family.

Binds to the 23S rRNA. This chain is Large ribosomal subunit protein bL9, found in Bartonella henselae (strain ATCC 49882 / DSM 28221 / CCUG 30454 / Houston 1) (Rochalimaea henselae).